The sequence spans 507 residues: Alpha-amylase 2 (507 aa).

Positions methionine 1–serine 20 are cleaved as a signal peptide. Cysteine 62 and cysteine 70 are disulfide-bonded. Residue tryptophan 115 coordinates substrate. Asparagine 153 lines the Ca(2+) pocket. Histidine 154 contributes to the substrate binding site. The cysteines at positions 182 and 196 are disulfide-linked. Ca(2+) contacts are provided by glutamate 194 and aspartate 207. Asparagine 229 carries an N-linked (GlcNAc...) asparagine glycan. Arginine 236 is a substrate binding site. Ca(2+)-binding residues include aspartate 238, histidine 242, and glutamate 262. Aspartate 238 (nucleophile) is an active-site residue. Residue lysine 241–histidine 242 coordinates substrate. Glutamate 262 acts as the Proton donor in catalysis. Residue glycine 266 participates in substrate binding. Cysteine 272 and cysteine 315 form a disulfide bridge. 2 residues coordinate substrate: aspartate 329 and arginine 376. Cysteine 470 and cysteine 505 are disulfide-bonded.

It belongs to the glycosyl hydrolase 13 family. Ca(2+) is required as a cofactor.

The enzyme catalyses Endohydrolysis of (1-&gt;4)-alpha-D-glucosidic linkages in polysaccharides containing three or more (1-&gt;4)-alpha-linked D-glucose units.. This is Alpha-amylase 2 (SWA2) from Schwanniomyces occidentalis (Yeast).